We begin with the raw amino-acid sequence, 635 residues long: MLRAINQNSAKVVKSLKQQLVVLEATNVVAYTGTKSFTTTKTFNNTQTKPKIFTSSNVLSFSSPSSSNVFSEILNKRSYSSKGKEITMPALSPSMTEGNIVQWKKKEGDQIKAGDVIAEVETDKATMDFQYEDGNGYLAKILIPEGTKGIEINKPIAIIVSKKEDIESAVKNYKPSSQASSTPVQEEAPKPKQEAPKKSTKTYPAHKVVGMPALSPSMETGGIASWTKKEGDQIKAGDAIAEVETDKATMDFQYEDGNGYLAKILVPGGTSGIQINQPVCIIVKNKEDCDKFADYSVEEQSSSSSSSSQESTPSSSSSSSQESTPSQSSSQQTTRKSGERIFATPAARFEASSKGYDLSAINGTGPNNRILKADVLEFVPQKQEVAQQQQQQTTTTTKKPTTPTSSGEFTDIPHSNIRKVTAARLTESKQTIPHYYLTMECRVDKLLKLRSELNAMNTVKISVNDFIVKASAAALRDNPVVNSTWTDQFIRRYHNIDINVAVNTPQGLFTPIVRGVDMKGLNSISTSVKQLAEKAQNGKLHPSEFESGTFTISNLGMLGIKQFAAVINPPQAAILAVGTTETRVVLSNKPDSPYETATILSVTLSCDHRVIDGAVGAEWLKSFKDYVENPIKLIL.

The Lipoyl-binding 1 domain maps to 83–160 (GKEITMPALS…EINKPIAIIV (78 aa)). Lys124 carries the N6-lipoyllysine modification. Residues 171 to 204 (KNYKPSSQASSTPVQEEAPKPKQEAPKKSTKTYP) are disordered. The segment covering 174-184 (KPSSQASSTPV) has biased composition (polar residues). Positions 187–197 (EAPKPKQEAPK) are enriched in basic and acidic residues. Residues 206-283 (HKVVGMPALS…QINQPVCIIV (78 aa)) enclose the Lipoyl-binding 2 domain. Lys247 is subject to N6-lipoyllysine. The tract at residues 295–338 (YSVEEQSSSSSSSSQESTPSSSSSSSQESTPSQSSSQQTTRKSG) is disordered. The span at 298 to 334 (EEQSSSSSSSSQESTPSSSSSSSQESTPSQSSSQQTT) shows a compositional bias: low complexity. Positions 342–379 (FATPAARFEASSKGYDLSAINGTGPNNRILKADVLEFV) constitute a Peripheral subunit-binding (PSBD) domain. The segment at 382-413 (KQEVAQQQQQQTTTTTKKPTTPTSSGEFTDIP) is disordered. A compositionally biased stretch (low complexity) spans 387-404 (QQQQQQTTTTTKKPTTPT). The catalytic stretch occupies residues 403 to 635 (PTSSGEFTDI…YVENPIKLIL (233 aa)).

The protein belongs to the 2-oxoacid dehydrogenase family. 20 to 30 alpha(2)-beta(2) tetramers of E1 + 6 homodimers of E3 + 60 copies of E2. (R)-lipoate serves as cofactor.

The protein resides in the mitochondrion matrix. The enzyme catalyses N(6)-[(R)-dihydrolipoyl]-L-lysyl-[protein] + acetyl-CoA = N(6)-[(R)-S(8)-acetyldihydrolipoyl]-L-lysyl-[protein] + CoA. Its function is as follows. The pyruvate dehydrogenase complex catalyzes the overall conversion of pyruvate to acetyl-CoA and CO(2). It contains multiple copies of three enzymatic components: pyruvate dehydrogenase (E1), dihydrolipoamide acetyltransferase (E2) and lipoamide dehydrogenase (E3). The polypeptide is Dihydrolipoyllysine-residue acetyltransferase component of pyruvate dehydrogenase complex, mitochondrial (pdhC) (Dictyostelium discoideum (Social amoeba)).